A 1214-amino-acid chain; its full sequence is Formin-D (1214 aa).

In terms of domain architecture, GBD/FH3 spans 10–379 (KKEESPQSID…KMNNGESYLD (370 aa)). The stretch at 401-448 (SGEKAVLIQKEIEDLKKQKKRDQDKLAEKDKLLTKLAKRMRKMEEAIK) forms a coiled coil. Positions 457 to 544 (NNQIEIESPP…GSGDGIPLPP (88 aa)) constitute an FH1 domain. 2 stretches are compositionally biased toward polar residues: residues 462–479 (IESP…TTPG) and 518–534 (LDTT…QTEA). Disordered regions lie at residues 462 to 490 (IESP…TSPV), 507 to 569 (APNG…SRPP), 868 to 948 (PKSV…PLKD), 1026 to 1045 (DKST…IKKS), 1054 to 1089 (LKKI…DDED), and 1133 to 1214 (MNLQ…EGEN). Positions 541-554 (PLPPGAPPPPPPPG) are enriched in pro residues. In terms of domain architecture, FH2 spans 562 to 1037 (PQLCSRPPSI…STQRKNEKER (476 aa)). Basic and acidic residues predominate over residues 868–877 (PKSVEPKPDD). Residues 930-940 (QVNTNSTSDSK) show a composition bias toward polar residues. Positions 1019 to 1056 (EIEKSIKDKSTQRKNEKERKEMEIKKSKLEMIHSKLKK) form a coiled coil. Residues 1059 to 1071 (SPSSSNRILASNE) are compositionally biased toward polar residues. The 31-residue stretch at 1065–1095 (RILASNESSPTSSTSSVVHQHDDEDEETIKE) folds into the DAD domain. Over residues 1161–1171 (SSTYSSISSIY) the composition is skewed to low complexity. The segment covering 1174–1214 (EPLDMSDQEDEDEEEEEDEEEEEEEEEGDDDNDNDEEEGEN) has biased composition (acidic residues). The stretch at 1176–1207 (LDMSDQEDEDEEEEEDEEEEEEEEEGDDDNDN) forms a coiled coil.

The protein belongs to the formin homology family. Diaphanous subfamily. As to quaternary structure, interacts (via GBD/FH3 domain) with activated Rho-GTPases.

Formins play an important role in the nucleation of actin and the formation of linear actin filaments. The protein is Formin-D (forD) of Dictyostelium discoideum (Social amoeba).